We begin with the raw amino-acid sequence, 201 residues long: Recombination protein RecR (201 aa).

The C4-type zinc finger occupies 57-72 (CSDCRTFTEQDVCAIC). In terms of domain architecture, Toprim spans 81-176 (GQICVVESPA…MASRIAHGVP (96 aa)).

This sequence belongs to the RecR family.

May play a role in DNA repair. It seems to be involved in an RecBC-independent recombinational process of DNA repair. It may act with RecF and RecO. The chain is Recombination protein RecR from Pectobacterium carotovorum subsp. carotovorum (strain PC1).